The primary structure comprises 357 residues: 3-dehydroquinate synthase (357 aa).

NAD(+) contacts are provided by residues 126–127 (TT), Lys139, and Lys148. Zn(2+)-binding residues include Glu181, His244, and His261.

Belongs to the sugar phosphate cyclases superfamily. Dehydroquinate synthase family. Co(2+) is required as a cofactor. The cofactor is Zn(2+). It depends on NAD(+) as a cofactor.

The protein localises to the cytoplasm. It carries out the reaction 7-phospho-2-dehydro-3-deoxy-D-arabino-heptonate = 3-dehydroquinate + phosphate. It functions in the pathway metabolic intermediate biosynthesis; chorismate biosynthesis; chorismate from D-erythrose 4-phosphate and phosphoenolpyruvate: step 2/7. Functionally, catalyzes the conversion of 3-deoxy-D-arabino-heptulosonate 7-phosphate (DAHP) to dehydroquinate (DHQ). The protein is 3-dehydroquinate synthase of Solibacter usitatus (strain Ellin6076).